A 229-amino-acid polypeptide reads, in one-letter code: Transcriptional regulatory protein CreB (229 aa).

One can recognise a Response regulatory domain in the interval 5-119 (TVWLVEDEQG…EVCARVRTLL (115 aa)). The residue at position 54 (Asp54) is a 4-aspartylphosphate. The ompR/PhoB-type DNA-binding region spans 129–228 (SPVIRIGHFE…HRGMGYSLRG (100 aa)).

In terms of processing, phosphorylated by CreC.

The protein localises to the cytoplasm. Member of the two-component regulatory system CreC/CreB involved in catabolic regulation. This Escherichia coli (strain K12) protein is Transcriptional regulatory protein CreB (creB).